A 99-amino-acid chain; its full sequence is Integration host factor subunit alpha (99 aa).

Residues Phe-49 to Ala-75 form a disordered region.

This sequence belongs to the bacterial histone-like protein family. Heterodimer of an alpha and a beta chain.

Functionally, this protein is one of the two subunits of integration host factor, a specific DNA-binding protein that functions in genetic recombination as well as in transcriptional and translational control. The sequence is that of Integration host factor subunit alpha from Salmonella arizonae (strain ATCC BAA-731 / CDC346-86 / RSK2980).